A 116-amino-acid polypeptide reads, in one-letter code: Ribosome-binding factor A (116 aa).

The protein belongs to the RbfA family. As to quaternary structure, monomer. Binds 30S ribosomal subunits, but not 50S ribosomal subunits or 70S ribosomes.

The protein resides in the cytoplasm. Functionally, one of several proteins that assist in the late maturation steps of the functional core of the 30S ribosomal subunit. Associates with free 30S ribosomal subunits (but not with 30S subunits that are part of 70S ribosomes or polysomes). Required for efficient processing of 16S rRNA. May interact with the 5'-terminal helix region of 16S rRNA. This chain is Ribosome-binding factor A, found in Chlorobium phaeobacteroides (strain DSM 266 / SMG 266 / 2430).